The sequence spans 291 residues: Cell division protein FtsX (291 aa).

Residues 1–18 (MSSNFDKFQKRRLISSYF) are Cytoplasmic-facing. A helical transmembrane segment spans residues 19–39 (SVVLSVFLVLFLLGVLGLFII). The Periplasmic segment spans residues 40-162 (NSKKLADDFK…VNLVNDNIKK (123 aa)). The helical transmembrane segment at 163 to 183 (VSMWILIISGFLTVIAVLLIN) threads the bilayer. Residues 184–220 (SSLRLSIHSNRFIIKTMQMVGATKSFIRKPFVMRSVK) are Cytoplasmic-facing. Residues 221–241 (LGMLGALLAIIALIGLLFYVE) form a helical membrane-spanning segment. At 242 to 253 (TNFPGLGILEDK) the chain is on the periplasmic side. The helical transmembrane segment at 254–274 (ALIGLVLLAVFGLGVLITWVS) threads the bilayer. Over 275–291 (THFATQRFLNLRTDDLY) the chain is Cytoplasmic.

This sequence belongs to the ABC-4 integral membrane protein family. FtsX subfamily.

It is found in the cell inner membrane. In terms of biological role, required for cell division and gliding motility. The chain is Cell division protein FtsX from Flavobacterium johnsoniae (strain ATCC 17061 / DSM 2064 / JCM 8514 / BCRC 14874 / CCUG 350202 / NBRC 14942 / NCIMB 11054 / UW101) (Cytophaga johnsonae).